A 74-amino-acid chain; its full sequence is MTVEKIEAQLTNLEMQLTFQEDTIDSLNKLVTEQTQQMSEMQKQIRWLGKRLKQMQENQSTDSDPADEPPPPHY.

Positions Leu52 to Tyr74 are disordered.

The protein belongs to the SlyX family.

The chain is Protein SlyX homolog from Idiomarina loihiensis (strain ATCC BAA-735 / DSM 15497 / L2-TR).